Reading from the N-terminus, the 147-residue chain is 3-dehydroquinate dehydratase (147 aa).

Residue tyrosine 23 is the Proton acceptor of the active site. Residues asparagine 75, histidine 81, and aspartate 88 each coordinate substrate. The active-site Proton donor is the histidine 101. Substrate is bound by residues 102–103 (LS) and arginine 112.

It belongs to the type-II 3-dehydroquinase family. As to quaternary structure, homododecamer.

The catalysed reaction is 3-dehydroquinate = 3-dehydroshikimate + H2O. Its pathway is metabolic intermediate biosynthesis; chorismate biosynthesis; chorismate from D-erythrose 4-phosphate and phosphoenolpyruvate: step 3/7. Its function is as follows. Catalyzes a trans-dehydration via an enolate intermediate. The polypeptide is 3-dehydroquinate dehydratase (Thioalkalivibrio sulfidiphilus (strain HL-EbGR7)).